The primary structure comprises 85 residues: Selenoprotein W (85 aa).

Residues 10–13 (CGAU) constitute a cross-link (cysteinyl-selenocysteine (Cys-Sec); redox-active). Position 13 (Sec-13) is a non-standard amino acid, selenocysteine.

It belongs to the SelWTH family. Selenoprotein W subfamily. Expressed ubiquitously with predominant expression in the pituitary, spinal cord, sciatic nerve, cerebral cortex, cerebral nuclei, thalamus, cerebellum, muscle, cartilage, trachea, gizzard and artery. Weakly expressed in pancreas, testis, ovary, kidney and veins.

The protein resides in the cytoplasm. Plays a role as a glutathione (GSH)-dependent antioxidant. May be involved in a redox-related process. May play a role in the myopathies of selenium deficiency. This is Selenoprotein W from Gallus gallus (Chicken).